The following is a 373-amino-acid chain: DNA primase small subunit PriS (373 aa).

Residues Asp-95, Asp-97, and Asp-281 contribute to the active site.

The protein belongs to the eukaryotic-type primase small subunit family. As to quaternary structure, heterodimer of a small subunit (PriS) and a large subunit (PriL). Mg(2+) is required as a cofactor. The cofactor is Mn(2+).

Its function is as follows. Catalytic subunit of DNA primase, an RNA polymerase that catalyzes the synthesis of short RNA molecules used as primers for DNA polymerase during DNA replication. The small subunit contains the primase catalytic core and has DNA synthesis activity on its own. Binding to the large subunit stabilizes and modulates the activity, increasing the rate of DNA synthesis while decreasing the length of the DNA fragments, and conferring RNA synthesis capability. The DNA polymerase activity may enable DNA primase to also catalyze primer extension after primer synthesis. May also play a role in DNA repair. This is DNA primase small subunit PriS from Nitrosopumilus maritimus (strain SCM1).